The primary structure comprises 174 residues: Large ribosomal subunit protein uL18 (174 aa).

Belongs to the universal ribosomal protein uL18 family. In terms of assembly, part of the 50S ribosomal subunit. Contacts the 5S and 23S rRNAs.

This is one of the proteins that bind and probably mediate the attachment of the 5S RNA into the large ribosomal subunit, where it forms part of the central protuberance. In Methanosarcina mazei (strain ATCC BAA-159 / DSM 3647 / Goe1 / Go1 / JCM 11833 / OCM 88) (Methanosarcina frisia), this protein is Large ribosomal subunit protein uL18.